The chain runs to 469 residues: Aspartyl/glutamyl-tRNA(Asn/Gln) amidotransferase subunit B (469 aa).

Belongs to the GatB/GatE family. GatB subfamily. Heterotrimer of A, B and C subunits.

It catalyses the reaction L-glutamyl-tRNA(Gln) + L-glutamine + ATP + H2O = L-glutaminyl-tRNA(Gln) + L-glutamate + ADP + phosphate + H(+). The catalysed reaction is L-aspartyl-tRNA(Asn) + L-glutamine + ATP + H2O = L-asparaginyl-tRNA(Asn) + L-glutamate + ADP + phosphate + 2 H(+). Allows the formation of correctly charged Asn-tRNA(Asn) or Gln-tRNA(Gln) through the transamidation of misacylated Asp-tRNA(Asn) or Glu-tRNA(Gln) in organisms which lack either or both of asparaginyl-tRNA or glutaminyl-tRNA synthetases. The reaction takes place in the presence of glutamine and ATP through an activated phospho-Asp-tRNA(Asn) or phospho-Glu-tRNA(Gln). The polypeptide is Aspartyl/glutamyl-tRNA(Asn/Gln) amidotransferase subunit B (Methanococcus aeolicus (strain ATCC BAA-1280 / DSM 17508 / OCM 812 / Nankai-3)).